Consider the following 64-residue polypeptide: Large ribosomal subunit protein bL35 (64 aa).

A disordered region spans residues 19-41 (SGKVKRERMNGSHNLEHKNRKRT). A compositionally biased stretch (basic and acidic residues) spans 25 to 35 (ERMNGSHNLEH).

The protein belongs to the bacterial ribosomal protein bL35 family.

The protein is Large ribosomal subunit protein bL35 of Chlorobaculum tepidum (strain ATCC 49652 / DSM 12025 / NBRC 103806 / TLS) (Chlorobium tepidum).